The sequence spans 332 residues: Ribonucleoside-diphosphate reductase small chain C (332 aa).

3 residues coordinate Fe cation: D76, E107, and H110. The active site involves Y114. Residues E169, E203, and H206 each contribute to the Fe cation site.

This sequence belongs to the ribonucleoside diphosphate reductase small chain family. Homodimer and heterodimer with RNR2A. Heterotetramer of two R1 and two R2 chains. Interacts with CSN7 (via C-terminal tail). Fe cation serves as cofactor. As to expression, expressed in roots, cauline and rosette leaves, stems and flowers.

It localises to the cytoplasm. The protein resides in the nucleus. The enzyme catalyses a 2'-deoxyribonucleoside 5'-diphosphate + [thioredoxin]-disulfide + H2O = a ribonucleoside 5'-diphosphate + [thioredoxin]-dithiol. Functionally, provides the precursors necessary for DNA synthesis. Catalyzes the biosynthesis of deoxyribonucleotides from the corresponding ribonucleotides. Involved in DNA damage repair and programmed cell death inhibition. This chain is Ribonucleoside-diphosphate reductase small chain C (TSO2), found in Arabidopsis thaliana (Mouse-ear cress).